Here is a 304-residue protein sequence, read N- to C-terminus: Haloalkane dehalogenase (304 aa).

The AB hydrolase-1 domain occupies 42 to 154 (PIVFLHGNPT…DSVDLSPEFV (113 aa)). Asp114 serves as the catalytic Nucleophile. Glu138 functions as the Proton donor in the catalytic mechanism. The active-site Proton acceptor is the His280.

This sequence belongs to the haloalkane dehalogenase family. Type 2 subfamily. Monomer.

The catalysed reaction is 1-haloalkane + H2O = a halide anion + a primary alcohol + H(+). Catalyzes hydrolytic cleavage of carbon-halogen bonds in halogenated aliphatic compounds, leading to the formation of the corresponding primary alcohols, halide ions and protons. The chain is Haloalkane dehalogenase from Agrobacterium fabrum (strain C58 / ATCC 33970) (Agrobacterium tumefaciens (strain C58)).